Reading from the N-terminus, the 1045-residue chain is MLRQVPRTLVAGGSALAVAVGVLVAPLATGAAAAPTYNYAEALQKSMFFYQAQRSGDLPADFPVSWRGDSGLTDGADVGKDLTGGWYDAGDHVKFGFPMAFSATMLAWGAIESPTGYSKAGSLDELKDNLRFVSDYFVKAHTAPNELYVQVGDGEADHKWWGPAEVMTMARPSHKISASCPGSDVAAETAAALASSAIVLKGDDPAYAATLVSHAKQLYTFADTYRGAYSDCVTAASAYYKSWSGYQDELVWGAYWLYKATGDATYLAKAEAEYDKLGTENQSTTRSYKWTIAWDNKQFGTYALLAMETGKQKYVDDANRWLDYWTVGVNGQKVPYSPGGQAVLDSWGALRYAANTSFVALVYSDWMTDATRKARYHDFGVRQINYALGDNPRSSSYVVGFGANPPTAPHHRTAHGSWLDSITTPAQSRHVLYGALVGGPGSPNDAYTDSRQDYVANEVATDYNAGFTSALARLVEEYGGTPLASFPTPEQPDGDQLFVEAMLNQPPSGTFTEVKAMIRNQSAFPARSLKNAKVRYWFTTDGFAASDVTLSANYSECGAQSGKGVSAGGTLGYVELSCVGQDIHPGGQSQHRREIQFRLTGPAGWNPANDPSYTGLTQTALAKASAITLYDGSTLVWGKEPTGTTTDTTPPTTPGTPVATGVTTVGASLSWAASTDAGSGVAGYELYRVQGTTQTLVGTTTAAAYILRDLTPGTAYSYVVKAKDVAGNVSAASAAVTFTTDTTGETEPPTTPGTPVASAVTSTGATLAWAPSTGDPAVSGYDVLRVQGTTTTVVAQTTVPTVTLSGLTPSTAYTYAVRAKNVAGDVSALSAPVTFTTAAPPVDTVAPTVPGTPVASNVATTGATLTWTASTDSGGSGLAGYEVLRVSGTTQTLVASPTTATVALAGLTPATAYSYVVRAKDGAGNVSAVSSPVTFTTLPVTSTPSCTVVYSTNSWNVGFTGSVKITNTGTTPLTWTLGFAFPSGQQVTQGWSATWSQTGTTVTATGLSWNATLQPGQSTDIGFNGSHPGTNTNPASFTVNGEVCG.

An N-terminal signal peptide occupies residues 1–33 (MLRQVPRTLVAGGSALAVAVGVLVAPLATGAAA). Residues 34 to 492 (APTYNYAEAL…LASFPTPEQP (459 aa)) form a catalytic region. The Nucleophile role is filled by aspartate 91. Catalysis depends on residues histidine 410, aspartate 449, and glutamate 458. The region spanning 493 to 642 (DGDQLFVEAM…STLVWGKEPT (150 aa)) is the CBM3 domain. Linker ('hinge') (Pro-Thr box) regions lie at residues 644 to 650 (TTTDTTP), 734 to 748 (AAVT…ETEP), 831 to 846 (APVT…DTVA), and 931 to 944 (SPVT…TSTP). Fibronectin type-III domains are found at residues 653–743 (TPGT…TDTT), 751–840 (TPGT…TAAP), and 849–940 (VPGT…TLPV). Residues 939-1045 (PVTSTPSCTV…SFTVNGEVCG (107 aa)) form the CBM2 domain. Cysteine 946 and cysteine 1044 form a disulfide bridge.

It belongs to the glycosyl hydrolase 9 (cellulase E) family.

The enzyme catalyses Endohydrolysis of (1-&gt;4)-beta-D-glucosidic linkages in cellulose, lichenin and cereal beta-D-glucans.. The biological conversion of cellulose to glucose generally requires three types of hydrolytic enzymes: (1) Endoglucanases which cut internal beta-1,4-glucosidic bonds; (2) Exocellobiohydrolases that cut the disaccharide cellobiose from the non-reducing end of the cellulose polymer chain; (3) Beta-1,4-glucosidases which hydrolyze the cellobiose and other short cello-oligosaccharides to glucose. The polypeptide is Endoglucanase B (cenB) (Cellulomonas fimi).